Here is a 333-residue protein sequence, read N- to C-terminus: 4-hydroxyproline epimerase (333 aa).

The active-site Proton acceptor is cysteine 90. Substrate-binding positions include 91–92 (GH) and aspartate 249. Cysteine 253 acts as the Proton donor in catalysis. 254–255 (GT) is a binding site for substrate.

Belongs to the proline racemase family. Homodimer.

It carries out the reaction trans-4-hydroxy-L-proline = cis-4-hydroxy-D-proline. Inhibited by iodoacetate, iodoacetamide and by high amounts (10 mM) of pyrrole-2-carboxylic acid (PYC). Not inhibited by PYC at 1 mM. Functionally, allows intracellular utilization of 4-hydroxyproline, one of the major constituents of host collagen, by converting 4-hydroxy-L-proline to 4-hydroxy-D-proline, which can be further metabolized by intracellular 4-hydroxy-D-proline oxidases. Strong B-cell mitogen. Plays an important role in the regulation of intra- and extracellular amino acid pools, allowing the bacterium to profit from host precursors and enzymatic pathways. The chain is 4-hydroxyproline epimerase from Brucella melitensis biotype 1 (strain ATCC 23456 / CCUG 17765 / NCTC 10094 / 16M).